We begin with the raw amino-acid sequence, 553 residues long: MRSDIIKEGPERAPNRSLLKATGVTDSEMRKPFIAVVNSWNDIIPGHIHLNKLAEAVKAGIRNAGGVPFEFHTIGVCDGIAMGHEGMKYSLPSREVIEDTIELMVKAHQFDGIVLIPTCDKIVPGHLMAAGRLDIPAIVVTGGPMLPGYVDDKYTDLISVFEGVGAYSTGKLSERDLKRLENLSCGGAGSCAGMFTANTMACVTEALGLSLPGCATAHAVDAKKARIAKESGERIVEMVKENLTPRKIVTFKSFENAIMVDMAVGGSTNTTLHLPALAHEFGLNLPLEKFDELSRETPHLISLRPGGPNFMLHFDRAGGVQAVMQRLSSKLHLDQLTVNGKTIGENLNEFEIINPKLNKEIIATLEKPIHAEGGIAVLKGNLAPNGSVVKQAAVDPKMRVHTGPAKVYDCEEDAMENILAGNVKPGDIVVIRYEGPKGGPGMREMLAATAAIGGMGLLESVALVTDGRFSGGTRGPCIGHISPEASEGGPIALVKDGDMIEINIPERVLNLKVSEEELEQRKAAFVPPKKEVTGYLARYQRSVHSANTGGIVD.

Asp-78 contributes to the Mg(2+) binding site. Cys-119 is a binding site for [2Fe-2S] cluster. The Mg(2+) site is built by Asp-120 and Lys-121. Position 121 is an N6-carboxylysine (Lys-121). Cys-191 lines the [2Fe-2S] cluster pocket. Residue Glu-444 participates in Mg(2+) binding. Ser-470 (proton acceptor) is an active-site residue.

It belongs to the IlvD/Edd family. As to quaternary structure, homodimer. The cofactor is [2Fe-2S] cluster. Mg(2+) is required as a cofactor.

The enzyme catalyses (2R)-2,3-dihydroxy-3-methylbutanoate = 3-methyl-2-oxobutanoate + H2O. It carries out the reaction (2R,3R)-2,3-dihydroxy-3-methylpentanoate = (S)-3-methyl-2-oxopentanoate + H2O. It participates in amino-acid biosynthesis; L-isoleucine biosynthesis; L-isoleucine from 2-oxobutanoate: step 3/4. The protein operates within amino-acid biosynthesis; L-valine biosynthesis; L-valine from pyruvate: step 3/4. In terms of biological role, functions in the biosynthesis of branched-chain amino acids. Catalyzes the dehydration of (2R,3R)-2,3-dihydroxy-3-methylpentanoate (2,3-dihydroxy-3-methylvalerate) into 2-oxo-3-methylpentanoate (2-oxo-3-methylvalerate) and of (2R)-2,3-dihydroxy-3-methylbutanoate (2,3-dihydroxyisovalerate) into 2-oxo-3-methylbutanoate (2-oxoisovalerate), the penultimate precursor to L-isoleucine and L-valine, respectively. This chain is Dihydroxy-acid dehydratase, found in Methanosarcina barkeri (strain Fusaro / DSM 804).